The chain runs to 181 residues: Ribulose bisphosphate carboxylase small subunit, chloroplastic (181 aa).

The N-terminal 56 residues, 1 to 56 (MASISSSAIATVNRTTSTQASLAAPFTGLKSNVAFPVTKKANNDFSSLPSNGGRVQ), are a transit peptide targeting the chloroplast.

The protein belongs to the RuBisCO small chain family. In terms of assembly, heterohexadecamer of 8 large and 8 small subunits.

It localises to the plastid. The protein localises to the chloroplast. RuBisCO catalyzes two reactions: the carboxylation of D-ribulose 1,5-bisphosphate, the primary event in carbon dioxide fixation, as well as the oxidative fragmentation of the pentose substrate. Both reactions occur simultaneously and in competition at the same active site. Although the small subunit is not catalytic it is essential for maximal activity. This Lactuca sativa (Garden lettuce) protein is Ribulose bisphosphate carboxylase small subunit, chloroplastic.